Reading from the N-terminus, the 280-residue chain is Phosphatidylglycerol--prolipoprotein diacylglyceryl transferase (280 aa).

The next 4 helical transmembrane spans lie at 23-43 (LRWY…LAGV), 58-78 (LLFW…VLFY), 93-113 (IWTG…ALWW), and 120-140 (CTFL…LGAG). A 1,2-diacyl-sn-glycero-3-phospho-(1'-sn-glycerol) is bound at residue arginine 141. 3 consecutive transmembrane segments (helical) span residues 173–193 (PSQL…LWLY), 200–220 (IGAV…FVEF), and 241–261 (QGQI…VWAV).

It belongs to the Lgt family.

It localises to the cell inner membrane. The enzyme catalyses L-cysteinyl-[prolipoprotein] + a 1,2-diacyl-sn-glycero-3-phospho-(1'-sn-glycerol) = an S-1,2-diacyl-sn-glyceryl-L-cysteinyl-[prolipoprotein] + sn-glycerol 1-phosphate + H(+). It participates in protein modification; lipoprotein biosynthesis (diacylglyceryl transfer). Catalyzes the transfer of the diacylglyceryl group from phosphatidylglycerol to the sulfhydryl group of the N-terminal cysteine of a prolipoprotein, the first step in the formation of mature lipoproteins. In Pseudoalteromonas atlantica (strain T6c / ATCC BAA-1087), this protein is Phosphatidylglycerol--prolipoprotein diacylglyceryl transferase.